The sequence spans 393 residues: Chorismate synthase (393 aa).

Positions 40 and 46 each coordinate NADP(+). Residues 129–131 (RSS), 249–250 (QA), G301, 316–320 (KPIPT), and R342 each bind FMN.

The protein belongs to the chorismate synthase family. As to quaternary structure, homotetramer. Requires FMNH2 as cofactor.

It catalyses the reaction 5-O-(1-carboxyvinyl)-3-phosphoshikimate = chorismate + phosphate. The protein operates within metabolic intermediate biosynthesis; chorismate biosynthesis; chorismate from D-erythrose 4-phosphate and phosphoenolpyruvate: step 7/7. Its function is as follows. Catalyzes the anti-1,4-elimination of the C-3 phosphate and the C-6 proR hydrogen from 5-enolpyruvylshikimate-3-phosphate (EPSP) to yield chorismate, which is the branch point compound that serves as the starting substrate for the three terminal pathways of aromatic amino acid biosynthesis. This reaction introduces a second double bond into the aromatic ring system. In Geobacter sulfurreducens (strain ATCC 51573 / DSM 12127 / PCA), this protein is Chorismate synthase.